A 977-amino-acid chain; its full sequence is Vacuolar protein sorting-associated protein 54 (977 aa).

Residue S8 is modified to Phosphoserine. Coiled-coil stretches lie at residues 240 to 260 and 480 to 507; these read ELQD…DKIA and LDKN…LDTE. A compositionally biased stretch (polar residues) spans 535–552; that stretch reads TSQRNASPNSEPCSSDSV. The interval 535–575 is disordered; sequence TSQRNASPNSEPCSSDSVSEPECTTDSSSSKEHTSSSAIPG. The stretch at 582 to 603 forms a coiled coil; the sequence is SEDMKLTDSELGKLANNIQELL.

The protein belongs to the VPS54 family. In terms of assembly, component of the Golgi-associated retrograde protein (GARP) complex, also called VFT (VPS fifty-three) complex, composed of VPS51, VPS52, VPS53 and VPS54. EIPR1 interacts with GARP complex and mediates its recruitment to the trans-Golgi network. Interacts with VPS51 in an EIPR1-independent manner.

It localises to the golgi apparatus. Its subcellular location is the trans-Golgi network. The protein localises to the membrane. Functionally, acts as a component of the GARP complex that is involved in retrograde transport from early and late endosomes to the trans-Golgi network (TGN). The GARP complex is required for the maintenance of the cycling of mannose 6-phosphate receptors between the TGN and endosomes, this cycling is necessary for proper lysosomal sorting of acid hydrolases such as CTSD. Within the GARP complex, required to tether the complex to the TGN. Not involved in endocytic recycling. This chain is Vacuolar protein sorting-associated protein 54 (VPS54), found in Homo sapiens (Human).